Reading from the N-terminus, the 45-residue chain is Large ribosomal subunit protein bL34 (45 aa).

Belongs to the bacterial ribosomal protein bL34 family.

This Kineococcus radiotolerans (strain ATCC BAA-149 / DSM 14245 / SRS30216) protein is Large ribosomal subunit protein bL34.